A 393-amino-acid polypeptide reads, in one-letter code: MDLVEKLKNDVREIEDWIIQIRRKIHEYPELSYKEYNTSKLVAETLRKLGVEVEEGVGLPTAVVGKIRGSKPGKTVALRADMDALPVEENTDLEFKSKVKGVMHACGHDTHVAMLLGGAYLLVKNKDLISGEIRLIFQPAEEDGGLGGAKPMIEAGVMNGVDYVFGIHISSSYPSGVFATRKGPIMATPDAFKIIVHGKGGHGSAPHETIDPIFISLQIANAIYGITARQIDPVQPFIISITTIHSGTKDNIIPDDAEMQGTIRSLDENVRSKAKDYMRRIVSSICGIYGATCEVKFMEDVYPTTVNNPEVTDEVMKILSSISTVVETEPVLGAEDFSRFLQKAPGTYFFLGTRNEKKGCIYPNHSSKFCVDEDVLKLGALAHALLAVKFSNK.

Zn(2+) is bound by residues H104, D109, and H245. Catalysis depends on Y302, which acts as the Proton donor. The active-site Nucleophile is the E373.

This sequence belongs to the peptidase M20 family. In terms of assembly, homotetramer. The cofactor is Zn(2+).

Its function is as follows. Can release basic, acidic, aromatic, and, to a lesser extent, aliphatic amino acids. The polypeptide is Thermostable carboxypeptidase 1 (cpsA1) (Saccharolobus solfataricus (strain ATCC 35092 / DSM 1617 / JCM 11322 / P2) (Sulfolobus solfataricus)).